We begin with the raw amino-acid sequence, 1001 residues long: RNA-binding protein 12B (1001 aa).

A phosphoserine mark is found at Ser-98, Ser-101, and Ser-112. A Glycyl lysine isopeptide (Lys-Gly) (interchain with G-Cter in SUMO2) cross-link involves residue Lys-114. Polar residues predominate over residues 119–128 (NSGYGSSINQ). Residues 119 to 147 (NSGYGSSINQDAGFHTNGTGHGNLRPRKT) form a disordered region. Residue Lys-151 forms a Glycyl lysine isopeptide (Lys-Gly) (interchain with G-Cter in SUMO2) linkage. In terms of domain architecture, RRM 1 spans 155–230 (PYLFLRGLPY…RFIEVMQGSE (76 aa)). Residues 247–262 (LRRSEEHSPPRGINDR) are compositionally biased toward basic and acidic residues. The tract at residues 247 to 278 (LRRSEEHSPPRGINDRHFRKRSHSKSPRRTRS) is disordered. A phosphoserine mark is found at Ser-250 and Ser-254. Residues 263–278 (HFRKRSHSKSPRRTRS) show a composition bias toward basic residues. Phosphothreonine is present on Thr-276. 4 positions are modified to phosphoserine: Ser-278, Ser-280, Ser-292, and Ser-294. Positions 284–360 (FYVHLKNLSL…RPVHIDPISR (77 aa)) constitute an RRM 2 domain. Lys-319 carries the N6-acetyllysine modification. Lys-335 participates in a covalent cross-link: Glycyl lysine isopeptide (Lys-Gly) (interchain with G-Cter in SUMO2). The residue at position 377 (Ser-377) is a Phosphoserine. Residues 400-477 (LCIYIRNFPF…TEVLLRLISE (78 aa)) enclose the RRM 3 domain. Residues Lys-514 and Lys-541 each participate in a glycyl lysine isopeptide (Lys-Gly) (interchain with G-Cter in SUMO2) cross-link. The disordered stretch occupies residues 544–587 (QRDFRQPDRHPPEDFRHSSEDFRFPPEDFRHSPEDFRRPREEDF). Phosphoserine is present on residues Ser-575, Ser-591, and Ser-638. The span at 631 to 881 (LEEDFRRSPT…FRSPPDDFRS (251 aa)) shows a compositional bias: basic and acidic residues. Positions 631–882 (LEEDFRRSPT…RSPPDDFRSH (252 aa)) are disordered. Phosphothreonine is present on Thr-640. A phosphoserine mark is found at Ser-710 and Ser-718. Lys-895 participates in a covalent cross-link: Glycyl lysine isopeptide (Lys-Gly) (interchain with G-Cter in SUMO2). The 77-residue stretch at 925–1001 (TPIKIMNLPF…GPRKVKLTLL (77 aa)) folds into the RRM 4 domain.

This is RNA-binding protein 12B (RBM12B) from Homo sapiens (Human).